The following is an 883-amino-acid chain: Phosphoenolpyruvate carboxylase (883 aa).

Active-site residues include H138 and K546.

The protein belongs to the PEPCase type 1 family. Mg(2+) is required as a cofactor.

It catalyses the reaction oxaloacetate + phosphate = phosphoenolpyruvate + hydrogencarbonate. Functionally, forms oxaloacetate, a four-carbon dicarboxylic acid source for the tricarboxylic acid cycle. This is Phosphoenolpyruvate carboxylase from Enterobacter sp. (strain 638).